The sequence spans 293 residues: NAD-dependent protein deacetylase (293 aa).

One can recognise a Deacetylase sirtuin-type domain in the interval 5 to 282 (PAHDHHTLQD…LHAPPHLPRA (278 aa)). Residues 27-47 (GAGC…GGWK) and 105-108 (QNVD) contribute to the NAD(+) site. Histidine 123 serves as the catalytic Proton acceptor. Positions 131, 134, 182, and 185 each coordinate Zn(2+). NAD(+)-binding positions include 222-224 (GSS), 248-250 (NFG), and cysteine 266.

This sequence belongs to the sirtuin family. Class II subfamily. It depends on Zn(2+) as a cofactor.

It localises to the cytoplasm. The enzyme catalyses N(6)-acetyl-L-lysyl-[protein] + NAD(+) + H2O = 2''-O-acetyl-ADP-D-ribose + nicotinamide + L-lysyl-[protein]. In terms of biological role, NAD-dependent protein deacetylase which modulates the activities of several enzymes which are inactive in their acetylated form. The polypeptide is NAD-dependent protein deacetylase (Xanthomonas axonopodis pv. citri (strain 306)).